The chain runs to 896 residues: Valine--tRNA ligase (896 aa).

The 'HIGH' region signature appears at 43–53 (PNVTGSLHIGH). Residues 545–549 (KMSKS) carry the 'KMSKS' region motif. Lys548 provides a ligand contact to ATP. A coiled-coil region spans residues 831–857 (DLDAERARLAKGIAAAEKERDGLAARL).

Belongs to the class-I aminoacyl-tRNA synthetase family. ValS type 1 subfamily. In terms of assembly, monomer.

Its subcellular location is the cytoplasm. It catalyses the reaction tRNA(Val) + L-valine + ATP = L-valyl-tRNA(Val) + AMP + diphosphate. Its function is as follows. Catalyzes the attachment of valine to tRNA(Val). As ValRS can inadvertently accommodate and process structurally similar amino acids such as threonine, to avoid such errors, it has a 'posttransfer' editing activity that hydrolyzes mischarged Thr-tRNA(Val) in a tRNA-dependent manner. The chain is Valine--tRNA ligase from Rhizorhabdus wittichii (strain DSM 6014 / CCUG 31198 / JCM 15750 / NBRC 105917 / EY 4224 / RW1) (Sphingomonas wittichii).